Consider the following 800-residue polypeptide: General transcription and DNA repair factor IIH helicase/translocase subunit XPB (800 aa).

A disordered region spans residues 1–27 (MSSGDSNLKRRRGGNTGQSSKSYNTWT). The segment covering 17–27 (GQSSKSYNTWT) has biased composition (polar residues). Residues 329–491 (MFGNGRARSG…DLNFLIGPKL (163 aa)) form the Helicase ATP-binding domain. 342–349 (LPCGAGKS) contributes to the ATP binding site. Positions 444–447 (DEVH) match the DEVH box motif. Residues 546 to 704 (RACEYLIRFH…ELPGIDQEVN (159 aa)) enclose the Helicase C-terminal domain. The disordered stretch occupies residues 743–769 (GAKKSKSSAPTVSRTTGGSTRALSGGN). Residues 749–764 (SSAPTVSRTTGGSTRA) are compositionally biased toward polar residues.

This sequence belongs to the helicase family. RAD25/XPB subfamily. In terms of assembly, component of the 7-subunit TFIIH core complex composed of XPB/repB, XPD/repD, gtf2h1, gtf2h2, gtf2h3, gtf2h4 and gtf2h5, which is active in NER. The core complex associates with the 3-subunit CDK-activating kinase (CAK) module composed of cycH/cyclin H, cdk7 and mnat1 to form the 10-subunit holoenzyme (holo-TFIIH) active in transcription.

The protein resides in the nucleus. The catalysed reaction is Couples ATP hydrolysis with the unwinding of duplex DNA by translocating in the 3'-5' direction.. The enzyme catalyses ATP + H2O = ADP + phosphate + H(+). Functionally, ATP-dependent 3'-5' DNA helicase/translocase; binds dsDNA rather than ssDNA, unzipping it in a translocase rather than classical helicase activity. Component of the general transcription and DNA repair factor IIH (TFIIH) core complex. When complexed to CDK-activating kinase (CAK), involved in RNA transcription by RNA polymerase II. The ATPase activity of XPB/ERCC3, but not its helicase activity, is required for DNA opening; it may wrap around the damaged DNA wedging it open, causing localized melting and twisting that allows XPD/ERCC2 helicase to anchor. The ATP-dependent helicase activity of XPB/ERCC3 may be required for promoter escape. Also involved in transcription-coupled nucleotide excision repair (NER) of damaged DNA. In NER, TFIIH acts by opening DNA around the lesion to allow the excision of the damaged oligonucleotide and its replacement by a new DNA fragment. The structure of the TFIIH transcription complex differs from the NER-TFIIH complex. This chain is General transcription and DNA repair factor IIH helicase/translocase subunit XPB, found in Dictyostelium discoideum (Social amoeba).